We begin with the raw amino-acid sequence, 185 residues long: ATP synthase subunit b, chloroplastic (185 aa).

The helical transmembrane segment at 31–53 (IINITVVLGILIYFGKGVLSNLL) threads the bilayer.

Belongs to the ATPase B chain family. In terms of assembly, F-type ATPases have 2 components, F(1) - the catalytic core - and F(0) - the membrane proton channel. F(1) has five subunits: alpha(3), beta(3), gamma(1), delta(1), epsilon(1). F(0) has four main subunits: a(1), b(1), b'(1) and c(10-14). The alpha and beta chains form an alternating ring which encloses part of the gamma chain. F(1) is attached to F(0) by a central stalk formed by the gamma and epsilon chains, while a peripheral stalk is formed by the delta, b and b' chains.

It is found in the plastid. The protein localises to the chloroplast thylakoid membrane. Its function is as follows. F(1)F(0) ATP synthase produces ATP from ADP in the presence of a proton or sodium gradient. F-type ATPases consist of two structural domains, F(1) containing the extramembraneous catalytic core and F(0) containing the membrane proton channel, linked together by a central stalk and a peripheral stalk. During catalysis, ATP synthesis in the catalytic domain of F(1) is coupled via a rotary mechanism of the central stalk subunits to proton translocation. Functionally, component of the F(0) channel, it forms part of the peripheral stalk, linking F(1) to F(0). This Gnetum parvifolium (Small-leaved jointfir) protein is ATP synthase subunit b, chloroplastic.